Consider the following 40-residue polypeptide: Photosystem II reaction center protein J (40 aa).

Residues 8 to 28 (IPLWIIGTVAGIPVIGLIGIF) traverse the membrane as a helical segment.

Belongs to the PsbJ family. PSII is composed of 1 copy each of membrane proteins PsbA, PsbB, PsbC, PsbD, PsbE, PsbF, PsbH, PsbI, PsbJ, PsbK, PsbL, PsbM, PsbT, PsbX, PsbY, PsbZ, Psb30/Ycf12, at least 3 peripheral proteins of the oxygen-evolving complex and a large number of cofactors. It forms dimeric complexes.

The protein resides in the plastid. The protein localises to the chloroplast thylakoid membrane. One of the components of the core complex of photosystem II (PSII). PSII is a light-driven water:plastoquinone oxidoreductase that uses light energy to abstract electrons from H(2)O, generating O(2) and a proton gradient subsequently used for ATP formation. It consists of a core antenna complex that captures photons, and an electron transfer chain that converts photonic excitation into a charge separation. This is Photosystem II reaction center protein J from Pelargonium hortorum (Common geranium).